The chain runs to 128 residues: Flagellar assembly factor FliW 1 (128 aa).

Belongs to the FliW family. Interacts with translational regulator CsrA and flagellin(s).

The protein resides in the cytoplasm. Its function is as follows. Acts as an anti-CsrA protein, binds CsrA and prevents it from repressing translation of its target genes, one of which is flagellin. Binds to flagellin and participates in the assembly of the flagellum. The polypeptide is Flagellar assembly factor FliW 1 (Wolinella succinogenes (strain ATCC 29543 / DSM 1740 / CCUG 13145 / JCM 31913 / LMG 7466 / NCTC 11488 / FDC 602W) (Vibrio succinogenes)).